The chain runs to 320 residues: tRNA(Ile)-lysidine synthase (320 aa).

33–38 (SGGPDS) is a binding site for ATP.

This sequence belongs to the tRNA(Ile)-lysidine synthase family.

The protein resides in the cytoplasm. The enzyme catalyses cytidine(34) in tRNA(Ile2) + L-lysine + ATP = lysidine(34) in tRNA(Ile2) + AMP + diphosphate + H(+). Its function is as follows. Ligates lysine onto the cytidine present at position 34 of the AUA codon-specific tRNA(Ile) that contains the anticodon CAU, in an ATP-dependent manner. Cytidine is converted to lysidine, thus changing the amino acid specificity of the tRNA from methionine to isoleucine. This chain is tRNA(Ile)-lysidine synthase, found in Mycolicibacterium paratuberculosis (strain ATCC BAA-968 / K-10) (Mycobacterium paratuberculosis).